A 194-amino-acid polypeptide reads, in one-letter code: Yellow fluorescent protein (194 aa).

Lumazine-binding repeat units lie at residues 1 to 98 (MFKG…SGGH) and 99 to 194 (ILSA…NQCW). 179-183 (KVNVE) provides a ligand contact to FMN.

In terms of assembly, homodimer. FMN is required as a cofactor.

Its function is as follows. Antenna protein that modulates the color of the bioluminescence emission of the luciferase. In the presence of YFP and only at temperatures below 20 degrees Celsius, luciferase exhibits a bimodal emission spectrum with a new peak at 545 nM (yellow), in addition to the one at 485 nM. The chain is Yellow fluorescent protein (luxY) from Aliivibrio fischeri (Vibrio fischeri).